Here is a 541-residue protein sequence, read N- to C-terminus: uncharacterized protein (541 aa).

The signal sequence occupies residues 1 to 22; it reads MQFKYGALIFSGFLGLSIVLAS. Cysteine 23 carries N-palmitoyl cysteine lipidation. The S-diacylglycerol cysteine moiety is linked to residue cysteine 23. Disordered stretches follow at residues 446–468 and 480–514; these read APGQSSQKEGGQQQSNSKDNGNL and KTKTEVKKTEDTQNQGKKAEGTPNQGKKAEGTENQ. Over residues 448–460 the composition is skewed to low complexity; the sequence is GQSSQKEGGQQQS. A compositionally biased stretch (basic and acidic residues) spans 480–490; the sequence is KTKTEVKKTED.

Belongs to the MG185/MG260 family.

The protein resides in the cell membrane. This is an uncharacterized protein from Mycoplasma pneumoniae (strain ATCC 29342 / M129 / Subtype 1) (Mycoplasmoides pneumoniae).